The following is a 318-amino-acid chain: Transaldolase (318 aa).

Lys-132 serves as the catalytic Schiff-base intermediate with substrate.

The protein belongs to the transaldolase family. Type 1 subfamily. In terms of assembly, homodimer.

The protein resides in the cytoplasm. It catalyses the reaction D-sedoheptulose 7-phosphate + D-glyceraldehyde 3-phosphate = D-erythrose 4-phosphate + beta-D-fructose 6-phosphate. It participates in carbohydrate degradation; pentose phosphate pathway; D-glyceraldehyde 3-phosphate and beta-D-fructose 6-phosphate from D-ribose 5-phosphate and D-xylulose 5-phosphate (non-oxidative stage): step 2/3. In terms of biological role, transaldolase is important for the balance of metabolites in the pentose-phosphate pathway. The protein is Transaldolase of Hamiltonella defensa subsp. Acyrthosiphon pisum (strain 5AT).